Here is a 560-residue protein sequence, read N- to C-terminus: Nibrin homolog (560 aa).

An FHA domain is found at Tyr-25–Gly-87. In terms of domain architecture, BRCT spans Thr-115–Lys-190. Positions Tyr-511–Asp-518 match the Nuclear localization signal motif.

It belongs to the Nibrin family. In terms of assembly, component of the MRN complex composed of two heterodimers RAD50 and MRE11 associated with a single NBS1.

It localises to the nucleus. The protein localises to the chromosome. Functionally, component of the MRN complex, which plays a central role in double-strand break (DSB) repair, DNA recombination, maintenance of telomere integrity and meiosis. The MRN complex is involved in the repair of DNA double-strand breaks (DSBs) via homologous recombination (HR), an error-free mechanism which primarily occurs during S and G2 phases. The complex (1) mediates the end resection of damaged DNA, which generates proper single-stranded DNA, a key initial steps in HR, and is (2) required for the recruitment of other repair factors and efficient activation of ATM and ATR upon DNA damage. The MRN complex possesses single-strand endonuclease activity and double-strand-specific 3'-5' exonuclease activity, which are provided by MRE11, to initiate end resection, which is required for single-strand invasion and recombination. Within the MRN complex, NBS1 acts as a protein-protein adapter, which specifically recognizes and binds phosphorylated proteins, promoting their recruitment to DNA damage sites. Recruits MRE11 and RAD50 components of the MRN complex to DSBs in response to DNA damage. The protein is Nibrin homolog of Oryza sativa subsp. indica (Rice).